The primary structure comprises 427 residues: Enolase (427 aa).

Gln-163 provides a ligand contact to (2R)-2-phosphoglycerate. Catalysis depends on Glu-205, which acts as the Proton donor. The Mg(2+) site is built by Asp-242, Glu-285, and Asp-312. (2R)-2-phosphoglycerate contacts are provided by Lys-337, Arg-366, Ser-367, and Lys-388. The active-site Proton acceptor is Lys-337.

It belongs to the enolase family. Mg(2+) is required as a cofactor.

Its subcellular location is the cytoplasm. It localises to the secreted. The protein resides in the cell surface. It carries out the reaction (2R)-2-phosphoglycerate = phosphoenolpyruvate + H2O. Its pathway is carbohydrate degradation; glycolysis; pyruvate from D-glyceraldehyde 3-phosphate: step 4/5. Functionally, catalyzes the reversible conversion of 2-phosphoglycerate (2-PG) into phosphoenolpyruvate (PEP). It is essential for the degradation of carbohydrates via glycolysis. This Burkholderia orbicola (strain MC0-3) protein is Enolase.